A 637-amino-acid chain; its full sequence is Pyrethroid hydrolase (637 aa).

It carries out the reaction (-)-trans-permethrin + H2O = (3-phenoxyphenyl)methanol + (1S,3R)-3-(2,2-dichlorovinyl)-2,2-dimethylcyclopropanecarboxylate + H(+). With respect to regulation, inhibited by Hg(2+), Ag(+) and rho-chloromercuribenzoate. In terms of biological role, catalyzes the hydrolysis of pyrethroids pesticides. Hydrolyzes cis-permethrin at approximately equal rate to trans-permethrin. The protein is Pyrethroid hydrolase (estP) of Klebsiella sp.